The chain runs to 156 residues: Organelle RRM domain-containing protein 2, mitochondrial (156 aa).

The N-terminal 28 residues, 1–28, are a transit peptide targeting the mitochondrion; sequence MAMAMRLPAISRAVTEVASAPVGLRRLF. An RRM domain is found at 56–134; it reads TNLFVSGLSK…WVIFAEYARP (79 aa). S64 carries the post-translational modification Phosphoserine. A compositionally biased stretch (polar residues) spans 137 to 148; sequence QSQSYQPQNNMS. The segment at 137–156 is disordered; sequence QSQSYQPQNNMSRPPYYGNR.

As to quaternary structure, interacts with RBG3/ORRM3. Binds to RBG2/ORRM5.

Its subcellular location is the mitochondrion. Involved in C-to-U editing of mitochondrial RNA. Functions as minor mitochondrial editing factor. Controls 6 percent of the mitochondrial editing sites. The sequence is that of Organelle RRM domain-containing protein 2, mitochondrial from Arabidopsis thaliana (Mouse-ear cress).